A 505-amino-acid polypeptide reads, in one-letter code: Probable alpha-L-arabinofuranosidase C (505 aa).

4 N-linked (GlcNAc...) asparagine glycosylation sites follow: N81, N152, N269, and N438.

Belongs to the glycosyl hydrolase 51 family.

It localises to the secreted. It carries out the reaction Hydrolysis of terminal non-reducing alpha-L-arabinofuranoside residues in alpha-L-arabinosides.. Its pathway is glycan metabolism; L-arabinan degradation. Its function is as follows. Alpha-L-arabinofuranosidase involved in the degradation of arabinoxylan, a major component of plant hemicellulose. Acts only on small linear 1,5-alpha-linked L-arabinofuranosyl oligosaccharides. This chain is Probable alpha-L-arabinofuranosidase C (abfC), found in Aspergillus fumigatus (strain ATCC MYA-4609 / CBS 101355 / FGSC A1100 / Af293) (Neosartorya fumigata).